Here is a 310-residue protein sequence, read N- to C-terminus: Coproporphyrin III ferrochelatase (310 aa).

Fe-coproporphyrin III-binding positions include tyrosine 13, arginine 30, 46-47 (RY), serine 54, and tyrosine 125. Fe(2+) is bound by residues histidine 181 and glutamate 262.

The protein belongs to the ferrochelatase family.

It is found in the cytoplasm. It catalyses the reaction Fe-coproporphyrin III + 2 H(+) = coproporphyrin III + Fe(2+). The protein operates within porphyrin-containing compound metabolism; protoheme biosynthesis. Involved in coproporphyrin-dependent heme b biosynthesis. Catalyzes the insertion of ferrous iron into coproporphyrin III to form Fe-coproporphyrin III. This is Coproporphyrin III ferrochelatase from Halalkalibacterium halodurans (strain ATCC BAA-125 / DSM 18197 / FERM 7344 / JCM 9153 / C-125) (Bacillus halodurans).